A 259-amino-acid chain; its full sequence is DNA-directed RNA polymerase 30 kDa polypeptide (259 aa).

Residues 155-195 (YNTPCPNCKSRNTTPMMIQTRAADEPPLVRHACRDCKQHFK) form a TFIIS-type zinc finger. 4 residues coordinate Zn(2+): Cys-159, Cys-162, Cys-187, and Cys-190. The interval 220 to 259 (EILPDNNPSPPESPEPASPIDDGLIRATFDRNDEPPEDDE) is disordered. Over residues 226-236 (NPSPPESPEPA) the composition is skewed to pro residues.

This sequence belongs to the poxviridae DNA-directed RNA polymerase 30 kDa subunit family. As to quaternary structure, the DNA-dependent RNA polymerase (vRNAP) consists of eight subunits encoded by early viral genes and termed according to their apparent molecular masses Rpo147, Rpo132, Rpo35, Rpo30, Rpo22, Rpo19, Rpo18, and Rpo7. The same holoenzyme, with the addition of the transcription-specificity factor RAP94, is used for early gene expression.

It is found in the virion. It localises to the host cytoplasm. The catalysed reaction is RNA(n) + a ribonucleoside 5'-triphosphate = RNA(n+1) + diphosphate. In terms of biological role, part of the DNA-dependent RNA polymerase which catalyzes the transcription of viral DNA into RNA using the four ribonucleoside triphosphates as substrates. Responsible for the transcription of early, intermediate and late genes. DNA-dependent RNA polymerase associates with the early transcription factor (ETF), itself composed of OPG118 and OPG134, thereby allowing the early genes transcription. Late transcription, and probably also intermediate transcription, require newly synthesized RNA polymerase. In Bos taurus (Bovine), this protein is DNA-directed RNA polymerase 30 kDa polypeptide (OPG066).